We begin with the raw amino-acid sequence, 156 residues long: U4/U6.U5 small nuclear ribonucleoprotein 27 kDa protein (156 aa).

Positions 1-98 (MGRSRSRSPE…IAAEDLEGKT (98 aa)) are disordered. The span at 13-59 (RERRRSRSASRERERRRRERSRSRERRRSRSRSPHRRRSRSPRRHRS) shows a compositional bias: basic residues. The segment covering 66 to 98 (RLKDRRDDDKKDSKESKGAKERQIAAEDLEGKT) has biased composition (basic and acidic residues).

It belongs to the SNUT3 family. In terms of assembly, part of a tri-snRNP complex.

Its subcellular location is the nucleus. In terms of biological role, may play a role in mRNA splicing. In Xenopus tropicalis (Western clawed frog), this protein is U4/U6.U5 small nuclear ribonucleoprotein 27 kDa protein (snrnp27).